The primary structure comprises 410 residues: F-box/WD repeat-containing protein 4 (410 aa).

Residues 23–69 (GPALWRLPEELLLLICSYLDTRALGRLAQVCRWLRRFTSCDLLWRPI) form the F-box domain. WD repeat units lie at residues 159–196 (GHDE…TVKY), 198–235 (AHEQ…LGQC), 289–327 (PPGA…RKCV), and 333–372 (PHDS…CLHA).

Part of a SCF (SKP1-cullin-F-box) protein ligase complex. Interacts with POUF51.

In terms of biological role, probably recognizes and binds to some phosphorylated proteins and promotes their ubiquitination and degradation. Likely to be involved in key signaling pathways crucial for normal limb development. May participate in Wnt signaling. This is F-box/WD repeat-containing protein 4 (Fbxw4) from Mus musculus (Mouse).